The sequence spans 91 residues: Small ribosomal subunit protein uS19 (91 aa).

Belongs to the universal ribosomal protein uS19 family.

Functionally, protein S19 forms a complex with S13 that binds strongly to the 16S ribosomal RNA. The polypeptide is Small ribosomal subunit protein uS19 (Ralstonia pickettii (strain 12J)).